A 582-amino-acid chain; its full sequence is Potassium-transporting ATPase potassium-binding subunit (582 aa).

Helical transmembrane passes span 6-26 (LVQLLFFLSVLLVLSWPLGLY), 65-85 (IYALVMLGLNAFGMVFVYVLE), 87-107 (LQGGLPLNPLHLPGVDPFVAV), 136-156 (GLAVQNFLSAATGMAVAVALI), 178-198 (VLYILLPLSFVLALLLVWQGV), 277-297 (LEMLAILLIPAALCHTFGVMI), 304-324 (LAILAAMTILFAGFAALTLAA), 402-422 (GLYGMLVFAVVTVFVAGLMVG), 441-461 (ALVILIPPFLCLAGTALAAVI), 505-525 (IAGAVAMFVSRYWLIVPVLAL), and 546-566 (GGIFVALLIIVVLVVGALTFV).

Belongs to the KdpA family. As to quaternary structure, the system is composed of three essential subunits: KdpA, KdpB and KdpC.

Its subcellular location is the cell inner membrane. In terms of biological role, part of the high-affinity ATP-driven potassium transport (or Kdp) system, which catalyzes the hydrolysis of ATP coupled with the electrogenic transport of potassium into the cytoplasm. This subunit binds the periplasmic potassium ions and delivers the ions to the membrane domain of KdpB through an intramembrane tunnel. In Solidesulfovibrio magneticus (strain ATCC 700980 / DSM 13731 / RS-1) (Desulfovibrio magneticus), this protein is Potassium-transporting ATPase potassium-binding subunit.